We begin with the raw amino-acid sequence, 366 residues long: MVIKFLSALILLLVTTAAQAERIRDLTSVQGVRQNSLIGYGLVVGLDGTGDQTTQTPFTTQTLNNMLSQLGITVPTGTNMQLKNVAAVMVTASLPPFGRQGQTIDVVVSSMGNAKSLRGGTLLMTPLKGVDSQVYALAQGNILVGGAGASAGGSSVQVNQLNGGRITNGAVIERELPSQFGVGNTLNLQLNDEDFSMAQQIADTINRVRGYGSATALDARTIQVRVPSGNSSQVRFLADIQNMQVNVTPQDAKVVINSRTGSVVMNREVTLDSCAVAQGNLSVTVNRQANVSQPDTPFGGGQTVVTPQTQIDLRQSGGSLQSVRSSASLNNVVRALNALGATPMDLMSILQSMQSAGCLRAKLEII.

A signal peptide spans 1–20 (MVIKFLSALILLLVTTAAQA).

Belongs to the FlgI family. As to quaternary structure, the basal body constitutes a major portion of the flagellar organelle and consists of four rings (L,P,S, and M) mounted on a central rod.

The protein localises to the periplasm. The protein resides in the bacterial flagellum basal body. Its function is as follows. Assembles around the rod to form the L-ring and probably protects the motor/basal body from shearing forces during rotation. The polypeptide is Flagellar P-ring protein (Escherichia coli (strain UTI89 / UPEC)).